The following is a 354-amino-acid chain: Short-chain dehydrogenase/reductase SAT2 (354 aa).

Isoleucine 31, aspartate 85, arginine 201, and valine 233 together coordinate NADP(+).

The protein belongs to the short-chain dehydrogenases/reductases (SDR) family.

It participates in mycotoxin biosynthesis. Its function is as follows. Short-chain dehydrogenase/reductase; part of the satratoxin SC1 cluster involved in the biosynthesis of satratoxins, trichothecene mycotoxins that are associated with human food poisonings. Satratoxins are suggested to be made by products of multiple gene clusters (SC1, SC2 and SC3) that encode 21 proteins in all, including polyketide synthases, acetyltransferases, and other enzymes expected to modify the trichothecene skeleton. SC1 encodes 10 proteins, SAT1 to SAT10. The largest are SAT8, which encodes a putative polyketide synthase (PKS) with a conventional non-reducing architecture, and SAT10, a putative protein containing four ankyrin repeats and thus may be involved in protein scaffolding. The putative short-chain reductase SAT3 may assist the PKS in some capacity. SAT6 contains a secretory lipase domain and acts probably as a trichothecene esterase. SAT5 encodes a putative acetyltransferase, and so, with SAT6, may affect endogenous protection from toxicity. The probable transcription factor SAT9 may regulate the expression of the SC1 cluster. SC2 encodes proteins SAT11 to SAT16, the largest of which encodes the putative reducing PKS SAT13. SAT11 is a cytochrome P450 monooxygenase, while SAT14 and SAT16 are probable acetyltransferases. The SC2 cluster may be regulated by the transcription factor SAT15. SC3 is a small cluster that encodes 5 proteins, SAT17 to SAT21. SAT21 is a putative MFS-type transporter which may have a role in exporting secondary metabolites. The four other proteins putatively encoded in SC3 include the taurine hydroxylase-like protein SAT17, the O-methyltransferase SAT18, the acetyltransferase SAT19, and the Cys6-type zinc finger SAT20, the latter being probably involved in regulation of SC3 expression. The polypeptide is Short-chain dehydrogenase/reductase SAT2 (Stachybotrys chartarum (strain CBS 109288 / IBT 7711) (Toxic black mold)).